The following is a 246-amino-acid chain: Major prion protein (246 aa).

The first 15 residues, 1–15 (MLVVFVATWSDLGLC), serve as a signal peptide directing secretion. The segment at 16 to 223 (KKRPKPGGWN…ESQAYYQRGS (208 aa)) is interaction with GRB2, ERI3 and SYN1. Residues 18–100 (RPKPGGWNTG…QWHKPSKPKT (83 aa)) form a disordered region. Repeat copies occupy residues 44–52 (PQGGGGWGQ), 53–60 (PHGGGWGQ), 61–68 (PHGGGWGQ), 69–76 (PHGGGWGQ), and 77–84 (PHGGGWGQ). The interval 44–84 (PQGGGGWGQPHGGGWGQPHGGGWGQPHGGGWGQPHGGGWGQ) is 5 X 8 AA tandem repeats of P-H-G-G-G-W-G-Q. The segment covering 45–88 (QGGGGWGQPHGGGWGQPHGGGWGQPHGGGWGQPHGGGWGQGGGT) has biased composition (gly residues). Cu(2+) is bound by residues His54, Gly55, Gly56, His62, Gly63, Gly64, His70, Gly71, Gly72, His78, Gly79, and Gly80. The segment covering 91–100 (QWHKPSKPKT) has biased composition (basic residues). Cys172 and Cys207 are disulfide-bonded. Asn174 and Asn190 each carry an N-linked (GlcNAc...) asparagine glycan. Ser223 carries GPI-anchor amidated serine lipidation. A propeptide spans 224–246 (SMVLFSSPPVILLISFLIFLIVG) (removed in mature form).

The protein belongs to the prion family. Monomer and homodimer. Has a tendency to aggregate into amyloid fibrils containing a cross-beta spine, formed by a steric zipper of superposed beta-strands. Soluble oligomers may represent an intermediate stage on the path to fibril formation. Copper binding may promote oligomerization. Interacts with GRB2, APP, ERI3/PRNPIP and SYN1. Mislocalized cytosolically exposed PrP interacts with MGRN1; this interaction alters MGRN1 subcellular location and causes lysosomal enlargement. Interacts with KIAA1191.

It is found in the cell membrane. Its subcellular location is the golgi apparatus. Its function is as follows. Its primary physiological function is unclear. Has cytoprotective activity against internal or environmental stresses. May play a role in neuronal development and synaptic plasticity. May be required for neuronal myelin sheath maintenance. May play a role in iron uptake and iron homeostasis. Soluble oligomers are toxic to cultured neuroblastoma cells and induce apoptosis (in vitro). Association with GPC1 (via its heparan sulfate chains) targets PRNP to lipid rafts. Also provides Cu(2+) or Zn(2+) for the ascorbate-mediated GPC1 deaminase degradation of its heparan sulfate side chains. This Erythrocebus patas (Red guenon) protein is Major prion protein (PRNP).